Reading from the N-terminus, the 338-residue chain is Ketol-acid reductoisomerase (NADP(+)) (338 aa).

A KARI N-terminal Rossmann domain is found at 1–181; that stretch reads MKVFYDKDCD…GGGKAGIIET (181 aa). Residues 24–27, arginine 47, and serine 52 contribute to the NADP(+) site; that span reads YGSQ. Residue histidine 107 is part of the active site. NADP(+) is bound at residue glycine 133. In terms of domain architecture, KARI C-terminal knotted spans 182-327; the sequence is NFKEETETDL…AQLRAMMPWI (146 aa). The Mg(2+) site is built by aspartate 190, glutamate 194, glutamate 226, and glutamate 230. Residue serine 251 coordinates substrate.

Belongs to the ketol-acid reductoisomerase family. It depends on Mg(2+) as a cofactor.

The enzyme catalyses (2R)-2,3-dihydroxy-3-methylbutanoate + NADP(+) = (2S)-2-acetolactate + NADPH + H(+). It catalyses the reaction (2R,3R)-2,3-dihydroxy-3-methylpentanoate + NADP(+) = (S)-2-ethyl-2-hydroxy-3-oxobutanoate + NADPH + H(+). The protein operates within amino-acid biosynthesis; L-isoleucine biosynthesis; L-isoleucine from 2-oxobutanoate: step 2/4. It functions in the pathway amino-acid biosynthesis; L-valine biosynthesis; L-valine from pyruvate: step 2/4. Involved in the biosynthesis of branched-chain amino acids (BCAA). Catalyzes an alkyl-migration followed by a ketol-acid reduction of (S)-2-acetolactate (S2AL) to yield (R)-2,3-dihydroxy-isovalerate. In the isomerase reaction, S2AL is rearranged via a Mg-dependent methyl migration to produce 3-hydroxy-3-methyl-2-ketobutyrate (HMKB). In the reductase reaction, this 2-ketoacid undergoes a metal-dependent reduction by NADPH to yield (R)-2,3-dihydroxy-isovalerate. This chain is Ketol-acid reductoisomerase (NADP(+)), found in Acidovorax ebreus (strain TPSY) (Diaphorobacter sp. (strain TPSY)).